Reading from the N-terminus, the 68-residue chain is Neuronal regeneration-related protein (68 aa).

In terms of assembly, interacts with FLNA. Interacts with the latency-associated peptides (LAP) of TGFB1 and TGFB2; the interaction results in a decrease in TGFB autoinduction. Phosphorylated on Ser-59. Phosphorylation decreases stability and activity.

Its subcellular location is the cytoplasm. In terms of biological role, may have roles in neural function. Ectopic expression promotes axonal regeneration. Also augments motility of gliomas. May also have roles in cellular differentiation. Induces differentiation of fibroblast into myofibroblast and myofibroblast ameboid migration. Increases retinoic-acid regulation of lipid-droplet biogenesis. Down-regulates the expression of TGFB1 and TGFB2 but not of TGFB3. May play a role in the regulation of alveolar generation. This Rattus norvegicus (Rat) protein is Neuronal regeneration-related protein (Nrep).